A 214-amino-acid chain; its full sequence is Ribosomal RNA small subunit methyltransferase G (214 aa).

S-adenosyl-L-methionine is bound by residues glycine 81, methionine 86, 132–133, and arginine 147; that span reads VE.

It belongs to the methyltransferase superfamily. RNA methyltransferase RsmG family.

The protein localises to the cytoplasm. It carries out the reaction guanosine(527) in 16S rRNA + S-adenosyl-L-methionine = N(7)-methylguanosine(527) in 16S rRNA + S-adenosyl-L-homocysteine. In terms of biological role, specifically methylates the N7 position of guanine in position 527 of 16S rRNA. The sequence is that of Ribosomal RNA small subunit methyltransferase G from Pseudomonas aeruginosa (strain LESB58).